The primary structure comprises 355 residues: 3-dehydroquinate synthase (355 aa).

NAD(+)-binding positions include 71–76 (EGEASK), 105–109 (GVVGD), 129–130 (TS), Lys-142, Lys-151, and 169–172 (TLKT). Residues Glu-184, His-246, and His-263 each contribute to the Zn(2+) site.

It belongs to the sugar phosphate cyclases superfamily. Dehydroquinate synthase family. It depends on Co(2+) as a cofactor. Zn(2+) serves as cofactor. NAD(+) is required as a cofactor.

It localises to the cytoplasm. It carries out the reaction 7-phospho-2-dehydro-3-deoxy-D-arabino-heptonate = 3-dehydroquinate + phosphate. Its pathway is metabolic intermediate biosynthesis; chorismate biosynthesis; chorismate from D-erythrose 4-phosphate and phosphoenolpyruvate: step 2/7. Its function is as follows. Catalyzes the conversion of 3-deoxy-D-arabino-heptulosonate 7-phosphate (DAHP) to dehydroquinate (DHQ). The chain is 3-dehydroquinate synthase from Streptococcus suis (strain 98HAH33).